Consider the following 270-residue polypeptide: Ethanolamine ammonia-lyase small subunit (270 aa).

Adenosylcob(III)alamin contacts are provided by Val-161, Glu-182, and Cys-211.

It belongs to the EutC family. The basic unit is a heterodimer which dimerizes to form tetramers. The heterotetramers trimerize; 6 large subunits form a core ring with 6 small subunits projecting outwards. Requires adenosylcob(III)alamin as cofactor.

The protein localises to the bacterial microcompartment. It carries out the reaction ethanolamine = acetaldehyde + NH4(+). The protein operates within amine and polyamine degradation; ethanolamine degradation. Its function is as follows. Catalyzes the deamination of various vicinal amino-alcohols to oxo compounds. Allows this organism to utilize ethanolamine as the sole source of nitrogen and carbon in the presence of external vitamin B12. This Azotobacter vinelandii (strain DJ / ATCC BAA-1303) protein is Ethanolamine ammonia-lyase small subunit.